The primary structure comprises 480 residues: Histone-lysine N-methyltransferase ASHR1 (480 aa).

One can recognise an SET domain in the interval 11–248; the sequence is RCLGVSNLPQ…KDSEITISYI (238 aa). 8 residues coordinate Zn(2+): cysteine 56, cysteine 59, cysteine 68, cysteine 71, cysteine 77, cysteine 81, histidine 89, and cysteine 93. The segment at 56–93 adopts an MYND-type zinc-finger fold; it reads CDGCFKTNNLKKCSACQVVWYCGSSCQKSEWKLHRDEC.

Belongs to the class V-like SAM-binding methyltransferase superfamily. Histone-lysine methyltransferase family. SET2 subfamily.

The protein resides in the nucleus. It is found in the chromosome. It catalyses the reaction L-lysyl-[histone] + S-adenosyl-L-methionine = N(6)-methyl-L-lysyl-[histone] + S-adenosyl-L-homocysteine + H(+). Histone methyltransferase. This is Histone-lysine N-methyltransferase ASHR1 (ASHR1) from Arabidopsis thaliana (Mouse-ear cress).